The primary structure comprises 593 residues: Transcriptional repressor p66-beta (593 aa).

Position 17 is a phosphoserine (Ser17). Residues Lys33, Lys66, and Lys97 each participate in a glycyl lysine isopeptide (Lys-Gly) (interchain with G-Cter in SUMO2) cross-link. The tract at residues 62–123 is disordered; it reads ELPTKQDGSG…PERGRLTPSP (62 aa). 2 stretches are compositionally biased toward basic and acidic residues: residues 74 to 100 and 108 to 118; these read GYEE…KENI and SARRSEPERGR. Thr120 carries the post-translational modification Phosphothreonine. 4 positions are modified to phosphoserine: Ser122, Ser129, Ser134, and Ser135. A coiled-coil region spans residues 140-194; it reads SRMEERLKAANLEMFKGKGIEERQQLIKQLRDELRLEEARLVLLKKLRQSQLQKE. A Glycyl lysine isopeptide (Lys-Gly) (interchain with G-Cter in SUMO2) cross-link involves residue Lys147. Residues 165–195 are CR1; interaction with MBD2 and MBD3; the sequence is LIKQLRDELRLEEARLVLLKKLRQSQLQKEN. A Glycyl lysine isopeptide (Lys-Gly) (interchain with G-Cter in SUMO2) cross-link involves residue Lys199. Ser208 is modified (phosphoserine). Positions 213–235 are disordered; that stretch reads SPAHVGQQGLSKLPSRPGAQGVE. Lys281 is covalently cross-linked (Glycyl lysine isopeptide (Lys-Gly) (interchain with G-Cter in SUMO2)). A phosphoserine mark is found at Ser333, Ser338, and Ser340. The tract at residues 340–480 is CR2; histone tail-binding; the sequence is SAMTDAANSQ…QEQEIEQRLQ (141 aa). Glycyl lysine isopeptide (Lys-Gly) (interchain with G-Cter in SUMO2) cross-links involve residues Lys353, Lys454, and Lys467. The GATA-type zinc finger occupies 414–467; the sequence is RVEPFVCAQCRTDFTPHWKQEKNGKILCEQCMTSNQKKALKAEHTNRLKNAFVK. Positions 449–482 form a coiled coil; it reads QKKALKAEHTNRLKNAFVKALQQEQEIEQRLQQQ. The residue at position 486 (Ser486) is a Phosphoserine. A Glycyl lysine isopeptide (Lys-Gly) (interchain with G-Cter in SUMO2) cross-link involves residue Lys498.

In terms of assembly, homooligomer. Component of the nucleosome remodeling and deacetylase (NuRD) repressor complex, composed of core proteins MTA1, MTA2, MTA3, RBBP4, RBBP7, HDAC1, HDAC2, MBD2, MBD3, and peripherally associated proteins CDK2AP1, CDK2AP2, GATAD2A, GATAD2B, CHD3, CHD4 and CHD5. The exact stoichiometry of the NuRD complex is unknown, and some subunits such as MBD2 and MBD3, GATAD2A and GATAD2B, and CHD3, CHD4 and CHD5 define mutually exclusive NuRD complexes. Interacts with MBD2; this is required for the enhancement of MBD2-mediated repression and for targeting to the chromatin. Interacts with MBD3. Component of the MeCP1 histone deacetylase complex. Interacts with histone tails, including that of histones H2A, H2B, H3 and H4. Interacts with ERCC6. In terms of tissue distribution, widely expressed.

It is found in the nucleus speckle. Its subcellular location is the nucleus. The protein resides in the chromosome. Functionally, transcriptional repressor. Acts as a component of the histone deacetylase NuRD complex which participates in the remodeling of chromatin. Enhances MBD2-mediated repression. Efficient repression requires the presence of GATAD2A. Targets MBD3 to discrete loci in the nucleus. May play a role in synapse development. This chain is Transcriptional repressor p66-beta (GATAD2B), found in Homo sapiens (Human).